The chain runs to 227 residues: Bone marrow proteoglycan (227 aa).

The first 16 residues, 1–16, serve as a signal peptide directing secretion; it reads MKFPLLLALLVGGAFA. The propeptide at 17 to 110 is acidic; the sequence is LHLSSEASDS…TSLMGDSGFK (94 aa). Positions 21 to 105 are disordered; the sequence is SEASDSKSPL…KEEDTTSLMG (85 aa). O-linked (GalNAc...) serine glycosylation is present at Ser24. A compositionally biased stretch (basic and acidic residues) spans 34-46; it reads SLPREAEISRPEV. Acidic residues predominate over residues 58-70; it reads LEEEEEEEEEEGS. O-linked (Xyl...) (chondroitin sulfate) serine glycosylation occurs at Ser70. The C-type lectin domain maps to 128-227; the sequence is LVCRSCYRGT…GKRRPFICAY (100 aa). Disulfide bonds link Cys130–Cys225 and Cys202–Cys217.

Post-translationally, nitrated.

It localises to the secreted. Functionally, cytotoxin and helminthotoxin. MBP also induces non-cytolytic histamine release from basophils. It is involved in antiparasitic defense mechanisms and immune hypersensitivity reactions. This Rattus norvegicus (Rat) protein is Bone marrow proteoglycan (Prg2).